Consider the following 410-residue polypeptide: Diguanylate cyclase DgcM (410 aa).

PAS domains lie at 3–70 and 129–198; these read THNF…NQHD and GFYA…HLPG. Residues 199–251 enclose the PAC domain; that stretch reads GHKPLNFIHKLADGSTRHVQTYAGPIEIYGDKLMLCIVHDITEQKRLEEQLEH. A GGDEF domain is found at 283–410; sequence QDYSLLLIDT…NDGRNRVLAA (128 aa). Residue D291 participates in Mg(2+) binding. Residues N299, H304, and D308 each contribute to the substrate site. E334 serves as a coordination point for Mg(2+). Catalysis depends on E334, which acts as the Proton acceptor.

Mg(2+) serves as cofactor.

The catalysed reaction is 2 GTP = 3',3'-c-di-GMP + 2 diphosphate. It functions in the pathway purine metabolism; 3',5'-cyclic di-GMP biosynthesis. Its function is as follows. Part of a signaling cascade that regulates curli biosynthesis. The cascade is composed of two cyclic-di-GMP (c-di-GMP) control modules, in which c-di-GMP controlled by the DgcE/PdeH pair (module I) regulates the activity of the DgcM/PdeR pair (module II), which in turn regulates activity of the transcription factor MlrA and expression of the master biofilm regulator csgD. The chain is Diguanylate cyclase DgcM from Escherichia coli O157:H7.